Here is a 325-residue protein sequence, read N- to C-terminus: MHTPVLTDRVLELLAPALSRPGAVVVDATVGLGGHAAALLAAFPEVRVVGLDRDLDALAHSGERLRALAPERVRLVHAVYDEIGTVLAGLGSARVQGVLFDLGVSSLQLDTDARGFAYSRDAPLDMRMDATRGLTAAEVLNTYDAAALARILRDYGEERFARRIAESVVRARAVEPFTTSARLVDLVRDAIPAPARRTGGNPAKRTFQALRIEVNSELDVLARALPAAFDALAVGGRLVVLSYHSLEDRLVKRELRGYAETLVPPDMPVVPAGAEPRLRWLTRGAEPAGEVEKADNPRAASVRLRAAERTAPNPDRTQPTIGGAS.

Residues 33–35 (GGH), aspartate 52, leucine 87, aspartate 101, and glutamine 108 contribute to the S-adenosyl-L-methionine site. Residues 285 to 325 (AEPAGEVEKADNPRAASVRLRAAERTAPNPDRTQPTIGGAS) are disordered. Residues 315–325 (DRTQPTIGGAS) show a composition bias toward polar residues.

It belongs to the methyltransferase superfamily. RsmH family.

The protein localises to the cytoplasm. The catalysed reaction is cytidine(1402) in 16S rRNA + S-adenosyl-L-methionine = N(4)-methylcytidine(1402) in 16S rRNA + S-adenosyl-L-homocysteine + H(+). Specifically methylates the N4 position of cytidine in position 1402 (C1402) of 16S rRNA. The chain is Ribosomal RNA small subunit methyltransferase H from Frankia alni (strain DSM 45986 / CECT 9034 / ACN14a).